Here is a 283-residue protein sequence, read N- to C-terminus: Stage II sporulation protein Q (283 aa).

The helical transmembrane segment at 22-42 (WVFPAIYLVSAAVILTAVLWY) threads the bilayer. The interval 228–283 (EKAATQETEESIQQSSEKKDGSTEKGTEEKSGEKKDDSTDKSGSKESSTTEDTEQS) is disordered. Basic and acidic residues predominate over residues 243–271 (SEKKDGSTEKGTEEKSGEKKDDSTDKSGS).

In terms of assembly, interacts with SpoIIIAH and SpoIIE.

It localises to the forespore membrane. In terms of biological role, involved in forespore engulfment and required for anchoring membrane proteins on the forespore side of the septal membrane. Forms a channel with SpoIIIAH that is open on the forespore end and closed (or gated) on the mother cell end. This allows sigma-E-directed gene expression in the mother-cell compartment of the sporangium to trigger the activation of sigma-G forespore-specific gene expression by a pathway of intercellular signaling. The chain is Stage II sporulation protein Q (spoIIQ) from Bacillus subtilis (strain 168).